We begin with the raw amino-acid sequence, 296 residues long: Ribosome biogenesis GTPase A (296 aa).

Residues 14–178 (RRQVTEKLKL…LLDTPGILWP (165 aa)) enclose the CP-type G domain. GTP contacts are provided by residues 58–61 (NKAD), 130–135 (NVGKST), and Gly174.

Belongs to the TRAFAC class YlqF/YawG GTPase family. MTG1 subfamily. Interacts with ctc. Interacts with the immature 50S ribosome subunit. 2 molecules of rbgA bind to one 50S subunit.

It localises to the cytoplasm. In terms of biological role, essential protein that is required for a late step of 50S ribosomal subunit assembly. Has GTPase activity that is stimulated by interaction with the immature 50S ribosome subunit. Binds to the 23S rRNA. Required for the association of ribosomal proteins rplP and rpmA with the large subunit. The protein is Ribosome biogenesis GTPase A of Bacillus cereus (strain ATCC 14579 / DSM 31 / CCUG 7414 / JCM 2152 / NBRC 15305 / NCIMB 9373 / NCTC 2599 / NRRL B-3711).